Consider the following 309-residue polypeptide: Protein FdhE (309 aa).

This sequence belongs to the FdhE family.

It is found in the cytoplasm. Its function is as follows. Necessary for formate dehydrogenase activity. In Salmonella arizonae (strain ATCC BAA-731 / CDC346-86 / RSK2980), this protein is Protein FdhE.